An 85-amino-acid chain; its full sequence is Small ribosomal subunit protein eS21 (85 aa).

This sequence belongs to the eukaryotic ribosomal protein eS21 family. In terms of assembly, component of the 40S small ribosomal subunit.

Its subcellular location is the cytoplasm. The protein resides in the cytosol. The protein localises to the rough endoplasmic reticulum. The polypeptide is Small ribosomal subunit protein eS21 (RPS21) (Branchiostoma belcheri (Amphioxus)).